The following is a 579-amino-acid chain: MISCSEEGSNKILVAISLDRDESQNVLSWAINVLAKPSDTVVALHLLVGEEPRKLPMKKKKRTQIRHAKAHVISMLGEFAYTCCHNQVNLEAKVGFSSNIGRGLIDEVKSISAHYLVLSRPTTHEFRIWNDIKRYVSDFAPSSCSVVLVGNQRKPHKDCYSDSAISLDINSEKYSPRSVLNTLSRDSLSSSGDDASSFNGSMVSSSFASPSDKPKHKSISPYKFISSLIMNSPLRKWRGSETKNKPKPQPLIQCFTYNEISKATNDFHQGNIVGIGGYSEVYRGDLWDGRRIAVKRLAKESGDMNKEKEFLTELGIISHVSHPNTALLLGCCVEKGLYLVFRFSENGTLYSALHENENGSLDWPVRYKIAVGVARGLHYLHKRCNHRIIHRDIKSSNVLLGPDYEPQITDFGLAKWLPNKWTHHAVIPVEGTFGYLAPESLMQGTIDEKTDIYAFGILLLEIITGRRPVNPTQKHILLWAKPAMETGNTSELVDPKLQDKYDDQQMNKLVLTASHCVQQSPILRPTMTQVLELLTNGNEAEIAKSWRMPKDMTNDDDDNNEWDDYSMIFGYDVPSDSSF.

Position 256 is a phosphothreonine (T256). Residues F267–I542 enclose the Protein kinase domain. ATP contacts are provided by residues V273–V281 and K295. D392 (proton acceptor) is an active-site residue. A Phosphoserine modification is found at S396. At T432 the chain carries Phosphothreonine.

The protein belongs to the protein kinase superfamily. Ser/Thr protein kinase family.

The catalysed reaction is L-seryl-[protein] + ATP = O-phospho-L-seryl-[protein] + ADP + H(+). It catalyses the reaction L-threonyl-[protein] + ATP = O-phospho-L-threonyl-[protein] + ADP + H(+). This Arabidopsis thaliana (Mouse-ear cress) protein is Probable receptor-like serine/threonine-protein kinase At5g57670.